Reading from the N-terminus, the 117-residue chain is UPF0122 protein Teth514_1714 (117 aa).

It belongs to the UPF0122 family.

In terms of biological role, might take part in the signal recognition particle (SRP) pathway. This is inferred from the conservation of its genetic proximity to ftsY/ffh. May be a regulatory protein. The polypeptide is UPF0122 protein Teth514_1714 (Thermoanaerobacter sp. (strain X514)).